Consider the following 151-residue polypeptide: Macrodomain Ter protein (151 aa).

The protein belongs to the MatP family. Homodimer.

It is found in the cytoplasm. In terms of biological role, required for spatial organization of the terminus region of the chromosome (Ter macrodomain) during the cell cycle. Prevents early segregation of duplicated Ter macrodomains during cell division. Binds specifically to matS, which is a 13 bp signature motif repeated within the Ter macrodomain. The polypeptide is Macrodomain Ter protein (Cronobacter sakazakii (strain ATCC BAA-894) (Enterobacter sakazakii)).